The sequence spans 303 residues: Cytosolic Fe-S cluster assembly factor CFD1 (303 aa).

An ATP-binding site is contributed by 15-22; it reads GKGGVGKS. Positions 199 and 202 each coordinate [4Fe-4S] cluster.

Belongs to the Mrp/NBP35 ATP-binding proteins family. NUBP2/CFD1 subfamily. Heterotetramer of 2 NBP35 and 2 CFD1 chains. [4Fe-4S] cluster is required as a cofactor.

It localises to the cytoplasm. Its function is as follows. Component of the cytosolic iron-sulfur (Fe/S) protein assembly (CIA) machinery. Required for maturation of extramitochondrial Fe-S proteins. The NBP35-CFD1 heterotetramer forms a Fe-S scaffold complex, mediating the de novo assembly of an Fe-S cluster and its transfer to target apoproteins. The sequence is that of Cytosolic Fe-S cluster assembly factor CFD1 from Chaetomium globosum (strain ATCC 6205 / CBS 148.51 / DSM 1962 / NBRC 6347 / NRRL 1970) (Soil fungus).